The following is a 147-amino-acid chain: Transthyretin (147 aa).

The N-terminal stretch at Met1–Ala20 is a signal peptide. Cys30 carries the sulfocysteine modification. Lys35 contacts L-thyroxine. Residue Glu62 is modified to 4-carboxyglutamate. Phosphoserine is present on Ser72. Residue Glu74 coordinates L-thyroxine. Residue Asn118 is glycosylated (N-linked (GlcNAc...) asparagine). Ser137 contributes to the L-thyroxine binding site.

Belongs to the transthyretin family. In terms of assembly, homotetramer. Dimer of dimers. In the homotetramer, subunits assemble around a central channel that can accommodate two ligand molecules. Interacts with RBP4. Sulfonation of the reactive cysteine Cys-30 enhances the stability of the native conformation of TTR, avoiding misassembly of the protein leading to amyloid formation. Detected in liver.

The protein resides in the secreted. Its function is as follows. Thyroid hormone-binding protein. Probably transports thyroxine from the bloodstream to the brain. The sequence is that of Transthyretin (TTR) from Pongo abelii (Sumatran orangutan).